The following is a 100-amino-acid chain: Co-chaperonin GroES (100 aa).

It belongs to the GroES chaperonin family. In terms of assembly, heptamer of 7 subunits arranged in a ring. Interacts with the chaperonin GroEL.

It is found in the cytoplasm. In terms of biological role, together with the chaperonin GroEL, plays an essential role in assisting protein folding. The GroEL-GroES system forms a nano-cage that allows encapsulation of the non-native substrate proteins and provides a physical environment optimized to promote and accelerate protein folding. GroES binds to the apical surface of the GroEL ring, thereby capping the opening of the GroEL channel. The protein is Co-chaperonin GroES of Mycobacterium marinum (strain ATCC BAA-535 / M).